We begin with the raw amino-acid sequence, 412 residues long: Divalent metal cation transporter MntH (412 aa).

11 helical membrane passes run 19–39, 46–66, 94–114, 122–142, 156–176, 196–216, 241–261, 290–310, 322–342, 348–368, and 392–412; these read LALM…GNFA, ASFG…AMLI, VWFY…AEFI, LILG…TFLI, VIGG…FFSQ, AVFL…IYLH, IAMT…AAAF, IFGL…TLAG, IPLW…ILMG, ILVM…VPLL, and AIVV…ALGL.

Belongs to the NRAMP family.

It is found in the cell inner membrane. Its function is as follows. H(+)-stimulated, divalent metal cation uptake system. In Cronobacter sakazakii (strain ATCC BAA-894) (Enterobacter sakazakii), this protein is Divalent metal cation transporter MntH.